The sequence spans 36 residues: Photosystem II reaction center protein M (36 aa).

A helical membrane pass occupies residues 7–27; that stretch reads GFVASLMFVLVPTVFLIVLFI.

It belongs to the PsbM family. In terms of assembly, PSII is composed of 1 copy each of membrane proteins PsbA, PsbB, PsbC, PsbD, PsbE, PsbF, PsbH, PsbI, PsbJ, PsbK, PsbL, PsbM, PsbT, PsbX, PsbY, PsbZ, Psb30/Ycf12, peripheral proteins PsbO, CyanoQ (PsbQ), PsbU, PsbV and a large number of cofactors. It forms dimeric complexes.

The protein resides in the cellular thylakoid membrane. In terms of biological role, one of the components of the core complex of photosystem II (PSII). PSII is a light-driven water:plastoquinone oxidoreductase that uses light energy to abstract electrons from H(2)O, generating O(2) and a proton gradient subsequently used for ATP formation. It consists of a core antenna complex that captures photons, and an electron transfer chain that converts photonic excitation into a charge separation. This subunit is found at the monomer-monomer interface. The protein is Photosystem II reaction center protein M of Synechococcus sp. (strain CC9311).